A 494-amino-acid chain; its full sequence is Ubiquitin carboxyl-terminal hydrolase 27 (494 aa).

Residues 30–50 (LSFAGLLGVAGFVFAQQHGLF) form a helical membrane-spanning segment. The USP domain occupies 74 to 494 (PGLQNLGNNC…EASLLFYERL (421 aa)). The active-site Nucleophile is C83. Residue H440 is the Proton acceptor of the active site.

Belongs to the peptidase C19 family.

It localises to the membrane. The enzyme catalyses Thiol-dependent hydrolysis of ester, thioester, amide, peptide and isopeptide bonds formed by the C-terminal Gly of ubiquitin (a 76-residue protein attached to proteins as an intracellular targeting signal).. In terms of biological role, recognizes and hydrolyzes the peptide bond at the C-terminal Gly of ubiquitin. Involved in the processing of poly-ubiquitin precursors as well as that of ubiquitinated proteins. This Arabidopsis thaliana (Mouse-ear cress) protein is Ubiquitin carboxyl-terminal hydrolase 27 (UBP27).